The chain runs to 500 residues: Transcription termination/antitermination protein NusA (500 aa).

Residues 135-205 enclose the S1 motif domain; the sequence is GEIVTGVVKK…RGAQLFVTRS (71 aa). Residues 307-373 form the KH domain; it reads KHTMDIAVEA…FTKYLDIDEE (67 aa). 2 repeat units span residues 369–419 and 444–494. Positions 369–494 are 2 X 51 AA approximate repeats; sequence DIDEEFATVL…ELIMAARNIC (126 aa).

This sequence belongs to the NusA family. Monomer. Binds directly to the core enzyme of the DNA-dependent RNA polymerase and to nascent RNA.

Its subcellular location is the cytoplasm. Functionally, participates in both transcription termination and antitermination. The polypeptide is Transcription termination/antitermination protein NusA (Salmonella typhimurium (strain LT2 / SGSC1412 / ATCC 700720)).